The primary structure comprises 222 residues: UPF0758 protein YicR (222 aa).

The MPN domain occupies 100 to 222 (PLLSPEMTRE…YVSFAERGWI (123 aa)). His171, His173, and Asp184 together coordinate Zn(2+). The short motif at 171–184 (HNHPSGCAEPSKAD) is the JAMM motif element.

It belongs to the UPF0758 family. YicR subfamily.

The sequence is that of UPF0758 protein YicR from Escherichia coli O9:H4 (strain HS).